A 141-amino-acid chain; its full sequence is MPVAVEDIMRLLCSISEERKMKAAVKHSGRGALVTGAVAFVGGLVGGPPGLAVGGAVGGLLGAWMTSGQFKPVPQIIMELPPAEQQKLFNEATAIIRHLEWTDAVQLTMLVMGSEALQKQLLAMLANYVTKELRAEVQYDD.

The chain crosses the membrane as a helical span at residues 37–57; that stretch reads AVAFVGGLVGGPPGLAVGGAV.

The protein belongs to the C19orf12 family.

Its subcellular location is the mitochondrion. It localises to the mitochondrion membrane. The protein localises to the endoplasmic reticulum. It is found in the cytoplasm. The protein resides in the cytosol. The chain is Protein C19orf12 homolog from Bos taurus (Bovine).